The following is a 165-amino-acid chain: uncharacterized protein (165 aa).

Residues 1–25 (MKRVLFSVIVFTAVGFTFCQSKAHA) form the signal peptide.

This is an uncharacterized protein from Bacillus subtilis (strain 168).